The following is a 402-amino-acid chain: Meiosis-specific cyclin rem1 (402 aa).

It belongs to the cyclin family. Cyclin AB subfamily.

Its function is as follows. Required for pre-meiotic DNA synthesis and S phase progression. Regulates levels of meiotic intragenic recombination. The sequence is that of Meiosis-specific cyclin rem1 (rem1) from Schizosaccharomyces pombe (strain 972 / ATCC 24843) (Fission yeast).